Here is an 88-residue protein sequence, read N- to C-terminus: Small ribosomal subunit protein bS20 (88 aa).

Residues 1 to 20 (MANTAQARKRARQAVVQNAH) form a disordered region.

The protein belongs to the bacterial ribosomal protein bS20 family.

Binds directly to 16S ribosomal RNA. The sequence is that of Small ribosomal subunit protein bS20 from Ralstonia nicotianae (strain ATCC BAA-1114 / GMI1000) (Ralstonia solanacearum).